We begin with the raw amino-acid sequence, 128 residues long: MRYAIMVTGAAYGTQQASSALQFAHALLNEGHELASVFFYREGVYNANLLTSPASDEYDLVRAWQKLNTQHGVALNICVAAALRRGIIDETEAGRLGLPSANLQPGFTLSGLGALAEASLTCDRVVQF.

The active-site Cysteine persulfide intermediate is the Cys-78.

Belongs to the DsrE/TusD family. As to quaternary structure, heterohexamer, formed by a dimer of trimers. The hexameric TusBCD complex contains 2 copies each of TusB, TusC and TusD. The TusBCD complex interacts with TusE.

The protein localises to the cytoplasm. Functionally, part of a sulfur-relay system required for 2-thiolation of 5-methylaminomethyl-2-thiouridine (mnm(5)s(2)U) at tRNA wobble positions. Accepts sulfur from TusA and transfers it in turn to TusE. In Salmonella newport (strain SL254), this protein is Sulfurtransferase TusD.